We begin with the raw amino-acid sequence, 278 residues long: Ribosomal RNA small subunit methyltransferase A (278 aa).

Positions 27, 29, 54, 75, 95, and 118 each coordinate S-adenosyl-L-methionine.

The protein belongs to the class I-like SAM-binding methyltransferase superfamily. rRNA adenine N(6)-methyltransferase family. RsmA subfamily.

It is found in the cytoplasm. It carries out the reaction adenosine(1518)/adenosine(1519) in 16S rRNA + 4 S-adenosyl-L-methionine = N(6)-dimethyladenosine(1518)/N(6)-dimethyladenosine(1519) in 16S rRNA + 4 S-adenosyl-L-homocysteine + 4 H(+). In terms of biological role, specifically dimethylates two adjacent adenosines (A1518 and A1519) in the loop of a conserved hairpin near the 3'-end of 16S rRNA in the 30S particle. May play a critical role in biogenesis of 30S subunits. The sequence is that of Ribosomal RNA small subunit methyltransferase A from Chlamydia caviae (strain ATCC VR-813 / DSM 19441 / 03DC25 / GPIC) (Chlamydophila caviae).